A 543-amino-acid chain; its full sequence is Chaperonin GroEL (543 aa).

ATP is bound by residues 29 to 32, 86 to 90, Gly413, 476 to 478, and Asp492; these read TLGP, DGTTT, and NAA.

The protein belongs to the chaperonin (HSP60) family. As to quaternary structure, forms a cylinder of 14 subunits composed of two heptameric rings stacked back-to-back. Interacts with the co-chaperonin GroES.

It localises to the cytoplasm. The catalysed reaction is ATP + H2O + a folded polypeptide = ADP + phosphate + an unfolded polypeptide.. Together with its co-chaperonin GroES, plays an essential role in assisting protein folding. The GroEL-GroES system forms a nano-cage that allows encapsulation of the non-native substrate proteins and provides a physical environment optimized to promote and accelerate protein folding. The polypeptide is Chaperonin GroEL (Brevibacillus choshinensis).